Consider the following 319-residue polypeptide: Acetyl-coenzyme A carboxylase carboxyl transferase subunit alpha (319 aa).

One can recognise a CoA carboxyltransferase C-terminal domain in the interval 34–295 (ELEEEVSKLK…KVRLKRDLAD (262 aa)).

The protein belongs to the AccA family. As to quaternary structure, acetyl-CoA carboxylase is a heterohexamer composed of biotin carboxyl carrier protein (AccB), biotin carboxylase (AccC) and two subunits each of ACCase subunit alpha (AccA) and ACCase subunit beta (AccD).

Its subcellular location is the cytoplasm. The enzyme catalyses N(6)-carboxybiotinyl-L-lysyl-[protein] + acetyl-CoA = N(6)-biotinyl-L-lysyl-[protein] + malonyl-CoA. It functions in the pathway lipid metabolism; malonyl-CoA biosynthesis; malonyl-CoA from acetyl-CoA: step 1/1. Its function is as follows. Component of the acetyl coenzyme A carboxylase (ACC) complex. First, biotin carboxylase catalyzes the carboxylation of biotin on its carrier protein (BCCP) and then the CO(2) group is transferred by the carboxyltransferase to acetyl-CoA to form malonyl-CoA. This is Acetyl-coenzyme A carboxylase carboxyl transferase subunit alpha from Pseudoalteromonas translucida (strain TAC 125).